The chain runs to 97 residues: RNA-binding protein Hfq (97 aa).

Positions 10-70 (DPFLNALRKE…ISTIVPARSV (61 aa)) constitute a Sm domain. The tract at residues 75 to 97 (ENRPQAAPASTLVQVETVQQPAE) is disordered. A compositionally biased stretch (polar residues) spans 85-97 (TLVQVETVQQPAE).

The protein belongs to the Hfq family. In terms of assembly, homohexamer.

Its function is as follows. RNA chaperone that binds small regulatory RNA (sRNAs) and mRNAs to facilitate mRNA translational regulation in response to envelope stress, environmental stress and changes in metabolite concentrations. Also binds with high specificity to tRNAs. This chain is RNA-binding protein Hfq, found in Neisseria meningitidis serogroup C / serotype 2a (strain ATCC 700532 / DSM 15464 / FAM18).